Reading from the N-terminus, the 186-residue chain is Zinc finger AN1 domain-containing stress-associated protein 12 (186 aa).

AN1-type zinc fingers lie at residues 10–58 and 97–147; these read PDLG…HGSR and KKKK…INTA. Residues C16, C21, C31, C34, C39, H42, H48, C50, C103, C108, C120, C123, C128, H131, H137, and C139 each coordinate Zn(2+). Residues 167-186 are disordered; that stretch reads KGCGRGSSVSSKSSPSVRSF. The span at 172–186 shows a compositional bias: low complexity; that stretch reads GSSVSSKSSPSVRSF.

Functionally, may be involved in environmental stress response. The polypeptide is Zinc finger AN1 domain-containing stress-associated protein 12 (SAP12) (Arabidopsis thaliana (Mouse-ear cress)).